Here is a 472-residue protein sequence, read N- to C-terminus: Adenosylhomocysteinase (472 aa).

Residues Thr-61, Asp-136, and Glu-196 each contribute to the substrate site. 197–199 (TTT) provides a ligand contact to NAD(+). Residues Lys-226 and Asp-230 each contribute to the substrate site. Residues Asn-231, 260 to 265 (GYGDVG), Glu-283, Asn-318, 339 to 341 (IGH), and Asn-384 each bind NAD(+).

This sequence belongs to the adenosylhomocysteinase family. Requires NAD(+) as cofactor.

It is found in the cytoplasm. The enzyme catalyses S-adenosyl-L-homocysteine + H2O = L-homocysteine + adenosine. The protein operates within amino-acid biosynthesis; L-homocysteine biosynthesis; L-homocysteine from S-adenosyl-L-homocysteine: step 1/1. May play a key role in the regulation of the intracellular concentration of adenosylhomocysteine. The chain is Adenosylhomocysteinase from Cupriavidus necator (strain ATCC 17699 / DSM 428 / KCTC 22496 / NCIMB 10442 / H16 / Stanier 337) (Ralstonia eutropha).